The primary structure comprises 181 residues: Insulin-like growth factor 2 (181 aa).

Positions 1-24 (MGIPMRKPLLVLLVFLALASCCYA) are cleaved as a signal peptide. Residues 25–52 (AYRPSETLCGGELVDTLQFVCGDRGFYF) form a b region. Disulfide bonds link C33-C71, C45-C84, and C70-C75. The segment at 53 to 64 (SRPASRVNRRSR) is c. The tract at residues 65–85 (GIVEECCFRSCDLALLETYCA) is a. Residues 86–91 (TPAKSE) are d. Positions 92 to 181 (RDVSTPPTVL…ASPEASGHRK (90 aa)) are cleaved as a propeptide — e peptide. Residues 151–181 (EAKRHRPLTARPTRDPAAHGGASPEASGHRK) form a disordered region. T163 carries an O-linked (GalNAc...) threonine glycan.

It belongs to the insulin family. In terms of assembly, interacts with MYORG; this interaction is required for IGF2 secretion. Interacts with integrins ITGAV:ITGB3 and ITGA6:ITGB4; integrin-binding is required for IGF2 signaling. Interacts with IGFBP2. In terms of processing, proteolytically processed by PCSK4, proIGF2 is cleaved at Arg-128 and Arg-92 to generate big-IGF2 and mature IGF2.

The protein resides in the secreted. In terms of biological role, the insulin-like growth factors possess growth-promoting activity. Major fetal growth hormone in mammals. Plays a key role in regulating fetoplacental development. IGF2 is influenced by placental lactogen. Also involved in tissue differentiation. In adults, involved in glucose metabolism in adipose tissue, skeletal muscle and liver. Acts as a ligand for integrin which is required for IGF2 signaling. Positively regulates myogenic transcription factor MYOD1 function by facilitating the recruitment of transcriptional coactivators, thereby controlling muscle terminal differentiation. Inhibits myoblast differentiation and modulates metabolism via increasing the mitochondrial respiration rate. Its function is as follows. Preptin undergoes glucose-mediated co-secretion with insulin, and acts as a physiological amplifier of glucose-mediated insulin secretion. Exhibits osteogenic properties by increasing osteoblast mitogenic activity through phosphoactivation of MAPK1 and MAPK3. In Sus scrofa (Pig), this protein is Insulin-like growth factor 2.